A 354-amino-acid polypeptide reads, in one-letter code: 3-dehydroquinate synthase (354 aa).

Residues 66–71, 100–104, 124–125, lysine 137, and lysine 146 contribute to the NAD(+) site; these read DGERYK, GVVGD, and TT. Zn(2+)-binding residues include glutamate 179, histidine 242, and histidine 259.

Belongs to the sugar phosphate cyclases superfamily. Dehydroquinate synthase family. The cofactor is Co(2+). Zn(2+) serves as cofactor. Requires NAD(+) as cofactor.

The protein resides in the cytoplasm. The enzyme catalyses 7-phospho-2-dehydro-3-deoxy-D-arabino-heptonate = 3-dehydroquinate + phosphate. It participates in metabolic intermediate biosynthesis; chorismate biosynthesis; chorismate from D-erythrose 4-phosphate and phosphoenolpyruvate: step 2/7. Functionally, catalyzes the conversion of 3-deoxy-D-arabino-heptulosonate 7-phosphate (DAHP) to dehydroquinate (DHQ). This chain is 3-dehydroquinate synthase, found in Halorhodospira halophila (strain DSM 244 / SL1) (Ectothiorhodospira halophila (strain DSM 244 / SL1)).